The primary structure comprises 414 residues: Multifunctional CCA protein (414 aa).

Residues glycine 8 and arginine 11 each coordinate ATP. CTP is bound by residues glycine 8 and arginine 11. Residues glutamate 21 and aspartate 23 each contribute to the Mg(2+) site. ATP contacts are provided by arginine 91, arginine 137, and arginine 140. Positions 91, 137, and 140 each coordinate CTP. Residues 228 to 329 (TGIHTMMTVA…LKLFDAIDVW (102 aa)) enclose the HD domain.

Belongs to the tRNA nucleotidyltransferase/poly(A) polymerase family. Bacterial CCA-adding enzyme type 1 subfamily. In terms of assembly, monomer. Can also form homodimers and oligomers. The cofactor is Mg(2+). It depends on Ni(2+) as a cofactor.

It carries out the reaction a tRNA precursor + 2 CTP + ATP = a tRNA with a 3' CCA end + 3 diphosphate. It catalyses the reaction a tRNA with a 3' CCA end + 2 CTP + ATP = a tRNA with a 3' CCACCA end + 3 diphosphate. Catalyzes the addition and repair of the essential 3'-terminal CCA sequence in tRNAs without using a nucleic acid template. Adds these three nucleotides in the order of C, C, and A to the tRNA nucleotide-73, using CTP and ATP as substrates and producing inorganic pyrophosphate. tRNA 3'-terminal CCA addition is required both for tRNA processing and repair. Also involved in tRNA surveillance by mediating tandem CCA addition to generate a CCACCA at the 3' terminus of unstable tRNAs. While stable tRNAs receive only 3'-terminal CCA, unstable tRNAs are marked with CCACCA and rapidly degraded. This chain is Multifunctional CCA protein, found in Pectobacterium atrosepticum (strain SCRI 1043 / ATCC BAA-672) (Erwinia carotovora subsp. atroseptica).